The primary structure comprises 428 residues: MIDPNLLRNNLEEVAEKLKVKRNFVLDVALLSELEEQRKSLQVKTESLQAERNARSKNIGQAKARGEDISALLNEVEHMGIELSTTKAHLDEVLAEINQIVLAIPNLPADEVPLGKDESENLEVFRWGTPKTFDFDVKDHVSLGEGLKGLDFAAGVKLSGSRFVVMKGQIAKLHRALSQFMLDLHTEQHGYTETYVPYLVNHATLYGTGQLPKFGEDLFHTNALEGEQPYALIPTAEVPVTNLVRDEILDEADLPLKMTAHTPCFRSEAGSYGRDTRGLIRMHQFDKVELVQIVAPETSMQVLEELTGQAEKVLQLLELPYRKVLLCTGDMGFGSCKTYDLEVWLPAQNTYREISSCSNMWDFQARRMQARCRSKTDKKTRLVHTLNGSGLAVGRTLVAILENYQNADGTITVPSVLRPYMGGLAQIG.

235–237 (TAE) contacts L-serine. Position 266–268 (266–268 (RSE)) interacts with ATP. An L-serine-binding site is contributed by Glu-289. Position 353-356 (353-356 (EISS)) interacts with ATP. Residue Ser-389 participates in L-serine binding.

The protein belongs to the class-II aminoacyl-tRNA synthetase family. Type-1 seryl-tRNA synthetase subfamily. In terms of assembly, homodimer. The tRNA molecule binds across the dimer.

It localises to the cytoplasm. It catalyses the reaction tRNA(Ser) + L-serine + ATP = L-seryl-tRNA(Ser) + AMP + diphosphate + H(+). It carries out the reaction tRNA(Sec) + L-serine + ATP = L-seryl-tRNA(Sec) + AMP + diphosphate + H(+). Its pathway is aminoacyl-tRNA biosynthesis; selenocysteinyl-tRNA(Sec) biosynthesis; L-seryl-tRNA(Sec) from L-serine and tRNA(Sec): step 1/1. Functionally, catalyzes the attachment of serine to tRNA(Ser). Is also able to aminoacylate tRNA(Sec) with serine, to form the misacylated tRNA L-seryl-tRNA(Sec), which will be further converted into selenocysteinyl-tRNA(Sec). The chain is Serine--tRNA ligase from Pasteurella multocida (strain Pm70).